Reading from the N-terminus, the 209-residue chain is Ephrin-A2 (209 aa).

The N-terminal stretch at M1–A20 is a signal peptide. In terms of domain architecture, Ephrin RBD spans A30 to N170. The N-linked (GlcNAc...) asparagine glycan is linked to N38. 2 cysteine pairs are disulfide-bonded: C69/C110 and C98/C159. N-linked (GlcNAc...) asparagine glycosylation is found at N170 and N184. A lipid anchor (GPI-anchor amidated asparagine) is attached at N184. Residues S185–S209 constitute a propeptide, removed in mature form.

This sequence belongs to the ephrin family. Binds to the receptor tyrosine kinases EPHA3, EPHA4 and EPHA5. Interacts with EPHA8; activates EPHA8. Expressed in myogenic progenitor cells.

The protein resides in the cell membrane. In terms of biological role, cell surface GPI-bound ligand for Eph receptors, a family of receptor tyrosine kinases which are crucial for migration, repulsion and adhesion during neuronal, vascular and epithelial development. Binds promiscuously Eph receptors residing on adjacent cells, leading to contact-dependent bidirectional signaling into neighboring cells. The signaling pathway downstream of the receptor is referred to as forward signaling while the signaling pathway downstream of the ephrin ligand is referred to as reverse signaling. With the EPHA2 receptor may play a role in bone remodeling through regulation of osteoclastogenesis and osteoblastogenesis. In Mus musculus (Mouse), this protein is Ephrin-A2 (Efna2).